The sequence spans 65 residues: Protein I2 homolog (65 aa).

The helical transmembrane segment at 40–60 (LSWLTIFIIFVVCIVVFTFLY) threads the bilayer.

Belongs to the chordopoxvirinae I2 family.

It localises to the virion membrane. In terms of biological role, late protein which probably plays a role in virus entry into the host cell. The chain is Protein I2 homolog from Fowlpox virus (strain NVSL) (FPV).